The following is a 429-amino-acid chain: Aspartate--tRNA(Asp/Asn) ligase (429 aa).

Position 166 (Glu166) interacts with L-aspartate. Positions 188 to 191 (QLYK) are aspartate. Arg210 contacts L-aspartate. ATP is bound by residues 210–212 (RAE), 218–220 (RHL), and Glu352. Mg(2+) is bound by residues Glu352 and Ser355. Ser355 and Arg359 together coordinate L-aspartate. 400-403 (GIER) is a binding site for ATP.

This sequence belongs to the class-II aminoacyl-tRNA synthetase family. Type 2 subfamily. As to quaternary structure, homodimer. Mg(2+) is required as a cofactor.

The protein resides in the cytoplasm. It carries out the reaction tRNA(Asx) + L-aspartate + ATP = L-aspartyl-tRNA(Asx) + AMP + diphosphate. Aspartyl-tRNA synthetase with relaxed tRNA specificity since it is able to aspartylate not only its cognate tRNA(Asp) but also tRNA(Asn). Reaction proceeds in two steps: L-aspartate is first activated by ATP to form Asp-AMP and then transferred to the acceptor end of tRNA(Asp/Asn). The sequence is that of Aspartate--tRNA(Asp/Asn) ligase from Methanoculleus marisnigri (strain ATCC 35101 / DSM 1498 / JR1).